The following is a 570-amino-acid chain: Sulfite reductase [NADPH] hemoprotein beta-component (570 aa).

[4Fe-4S] cluster-binding residues include C434, C440, C479, and C483. C483 lines the siroheme pocket.

Belongs to the nitrite and sulfite reductase 4Fe-4S domain family. In terms of assembly, alpha(8)-beta(8). The alpha component is a flavoprotein, the beta component is a hemoprotein. Requires siroheme as cofactor. The cofactor is [4Fe-4S] cluster.

It carries out the reaction hydrogen sulfide + 3 NADP(+) + 3 H2O = sulfite + 3 NADPH + 4 H(+). The protein operates within sulfur metabolism; hydrogen sulfide biosynthesis; hydrogen sulfide from sulfite (NADPH route): step 1/1. In terms of biological role, component of the sulfite reductase complex that catalyzes the 6-electron reduction of sulfite to sulfide. This is one of several activities required for the biosynthesis of L-cysteine from sulfate. The chain is Sulfite reductase [NADPH] hemoprotein beta-component from Shigella dysenteriae serotype 1 (strain Sd197).